The chain runs to 47 residues: Large ribosomal subunit protein bL34 (47 aa).

The protein belongs to the bacterial ribosomal protein bL34 family.

The protein is Large ribosomal subunit protein bL34 of Mycolicibacterium vanbaalenii (strain DSM 7251 / JCM 13017 / BCRC 16820 / KCTC 9966 / NRRL B-24157 / PYR-1) (Mycobacterium vanbaalenii).